The chain runs to 262 residues: ATP synthase subunit a (262 aa).

Transmembrane regions (helical) follow at residues 24–44 (AVHL…LVVF), 85–105 (IAPL…IDLV), 129–149 (DISA…FYTV), 194–214 (LFGN…MYMA), and 228–248 (LVWA…FMML).

This sequence belongs to the ATPase A chain family. As to quaternary structure, F-type ATPases have 2 components, CF(1) - the catalytic core - and CF(0) - the membrane proton channel. CF(1) has five subunits: alpha(3), beta(3), gamma(1), delta(1), epsilon(1). CF(0) has three main subunits: a(1), b(2) and c(9-12). The alpha and beta chains form an alternating ring which encloses part of the gamma chain. CF(1) is attached to CF(0) by a central stalk formed by the gamma and epsilon chains, while a peripheral stalk is formed by the delta and b chains.

The protein localises to the cell inner membrane. Functionally, key component of the proton channel; it plays a direct role in the translocation of protons across the membrane. The sequence is that of ATP synthase subunit a from Haemophilus ducreyi (strain 35000HP / ATCC 700724).